A 456-amino-acid chain; its full sequence is UDP-N-acetylmuramoylalanine--D-glutamate ligase (456 aa).

121–127 (GTNGKTT) serves as a coordination point for ATP.

This sequence belongs to the MurCDEF family.

It localises to the cytoplasm. The catalysed reaction is UDP-N-acetyl-alpha-D-muramoyl-L-alanine + D-glutamate + ATP = UDP-N-acetyl-alpha-D-muramoyl-L-alanyl-D-glutamate + ADP + phosphate + H(+). It functions in the pathway cell wall biogenesis; peptidoglycan biosynthesis. Cell wall formation. Catalyzes the addition of glutamate to the nucleotide precursor UDP-N-acetylmuramoyl-L-alanine (UMA). In Desulfotalea psychrophila (strain LSv54 / DSM 12343), this protein is UDP-N-acetylmuramoylalanine--D-glutamate ligase.